The primary structure comprises 193 residues: Proteasome subunit beta 1 (193 aa).

The propeptide at methionine 1 to alanine 4 is removed in mature form; by autocatalysis. Catalysis depends on threonine 5, which acts as the Nucleophile.

It belongs to the peptidase T1B family. As to quaternary structure, the 20S proteasome core is composed of 14 alpha and 14 beta subunits that assemble into four stacked heptameric rings, resulting in a barrel-shaped structure. The two inner rings, each composed of seven catalytic beta subunits, are sandwiched by two outer rings, each composed of seven alpha subunits. The catalytic chamber with the active sites is on the inside of the barrel. Has a gated structure, the ends of the cylinder being occluded by the N-termini of the alpha-subunits. Is capped at one or both ends by the proteasome regulatory ATPase, PAN.

It localises to the cytoplasm. The catalysed reaction is Cleavage of peptide bonds with very broad specificity.. The formation of the proteasomal ATPase PAN-20S proteasome complex, via the docking of the C-termini of PAN into the intersubunit pockets in the alpha-rings, triggers opening of the gate for substrate entry. Interconversion between the open-gate and close-gate conformations leads to a dynamic regulation of the 20S proteasome proteolysis activity. Component of the proteasome core, a large protease complex with broad specificity involved in protein degradation. This Cenarchaeum symbiosum (strain A) protein is Proteasome subunit beta 1.